Here is a 316-residue protein sequence, read N- to C-terminus: DNA-directed RNA polymerase subunit alpha (316 aa).

The segment at 1–233 (MCMSQFPIEF…HWFNPLQTLE (233 aa)) is alpha N-terminal domain (alpha-NTD). The interval 245–316 (MAQLSNMLIE…LHCQLKKYVD (72 aa)) is alpha C-terminal domain (alpha-CTD).

This sequence belongs to the RNA polymerase alpha chain family. In terms of assembly, in plastids the minimal PEP RNA polymerase catalytic core is composed of four subunits: alpha, beta, beta', and beta''. When a (nuclear-encoded) sigma factor is associated with the core the holoenzyme is formed, which can initiate transcription.

It is found in the plastid. It localises to the chloroplast. It catalyses the reaction RNA(n) + a ribonucleoside 5'-triphosphate = RNA(n+1) + diphosphate. DNA-dependent RNA polymerase catalyzes the transcription of DNA into RNA using the four ribonucleoside triphosphates as substrates. The chain is DNA-directed RNA polymerase subunit alpha from Cyanidioschyzon merolae (strain NIES-3377 / 10D) (Unicellular red alga).